The primary structure comprises 551 residues: Transcription factor p65 (551 aa).

An N-acetylmethionine modification is found at methionine 1. The region spanning 19–306 (PYVEIIEQPK…RIEEKRKRTY (288 aa)) is the RHD domain. Lysine 37 participates in a covalent cross-link: Glycyl lysine isopeptide (Lys-Gly) (interchain with G-Cter in SUMO3). A Cysteine persulfide; alternate modification is found at cysteine 38. Cysteine 38 is subject to S-nitrosocysteine; alternate. (Microbial infection) Phosphoserine is present on serine 75. N6-acetyllysine; by PCAF and EP300; alternate occurs at positions 122 and 123. Residues lysine 122 and lysine 123 each participate in a glycyl lysine isopeptide (Lys-Gly) (interchain with G-Cter in SUMO3); alternate cross-link. Lysine 218 and lysine 221 each carry N6-acetyllysine. Threonine 254 carries the phosphothreonine modification. Serine 276 carries the post-translational modification Phosphoserine; by RPS6KA4 and RPS6KA5. At serine 281 the chain carries Phosphoserine. A Nuclear localization signal motif is present at residues 301 to 304 (KRKR). A disordered region spans residues 309–348 (FKSIMKKSPFSGPTDPRPPPRRIAVPSRSSASVPKPAPQP). N6-acetyllysine; alternate is present on lysine 310. N6-methyllysine; by SETD6; alternate is present on lysine 310. Residue serine 311 is modified to Phosphoserine; by PKC/PRKCZ. Transcriptional activation domain stretches follow at residues 342–389 (PKPA…VLPQ) and 415–476 (PGPP…EFQQ). The residue at position 435 (threonine 435) is a Phosphothreonine. At serine 468 the chain carries Phosphoserine; by IKKB and IKKE. Residue threonine 505 is modified to Phosphothreonine; by CHEK1. The interval 506 to 530 (GAQRPPDPAPAPLGAPGLPNGLLSG) is disordered. Over residues 519 to 528 (GAPGLPNGLL) the composition is skewed to low complexity. Residues 520 to 551 (APGLPNGLLSGDEDFSSIADMDFSALLSQISS) are transcriptional activation domain 2. Serine 529 bears the Phosphoserine; by CK2 mark. A Phosphoserine; by IKKB modification is found at serine 536. The 9aaTAD motif lies at 536-544 (SIADMDFSA).

In terms of assembly, component of the NF-kappa-B p65-p50 complex. Component of the NF-kappa-B p65-c-Rel complex. Homodimer; component of the NF-kappa-B p65-p65 complex. Component of the NF-kappa-B p65-p52 complex. May interact with ETHE1. Binds TLE5 and TLE1. Interacts with TP53BP2. Binds to and is phosphorylated by the activated form of either RPS6KA4 or RPS6KA5. Interacts with ING4 and this interaction may be indirect. Interacts with CARM1, USP48 and UNC5CL. Interacts with IRAK1BP1. Interacts with NFKBID. Interacts with NFKBIA. Interacts with GSK3B. Interacts with NFKBIB. Interacts with NFKBIE. Interacts with NFKBIZ. Interacts with EHMT1 (via ANK repeats). Part of a 70-90 kDa complex at least consisting of CHUK, IKBKB, NFKBIA, RELA, ELP1 and MAP3K14. Interacts with HDAC3; HDAC3 mediates the deacetylation of RELA. Interacts with HDAC1; the interaction requires non-phosphorylated RELA. Interacts with CBP; the interaction requires phosphorylated RELA. Interacts (phosphorylated at 'Thr-254') with PIN1; the interaction inhibits p65 binding to NFKBIA. Interacts with SOCS1. Interacts with UXT. Interacts with MTDH and PHF11. Interacts with ARRB2. Interacts with NFKBIA (when phosphorylated), the interaction is direct; phosphorylated NFKBIA is part of a SCF(BTRC)-like complex lacking CUL1. Interacts with RNF25. Interacts (via C-terminus) with DDX1. Interacts with UFL1 and COMMD1. Interacts with BRMS1; this promotes deacetylation of 'Lys-310'. Interacts with NOTCH2. Directly interacts with MEN1; this interaction represses NFKB-mediated transactivation. Interacts with AKIP1, which promotes the phosphorylation and nuclear retention of RELA. Interacts (via the RHD) with GFI1; the interaction, after bacterial lipopolysaccharide (LPS) stimulation, inhibits the transcriptional activity by interfering with the DNA-binding activity to target gene promoter DNA. Interacts (when acetylated at Lys-310) with BRD4; leading to activation of the NF-kappa-B pathway. Interacts with MEFV. Interacts with CLOCK. Interacts (via N-terminus) with CPEN1; this interaction induces proteolytic cleavage of p65/RELA subunit and inhibition of NF-kappa-B transcriptional activity. Interacts with FOXP3. Interacts with CDK5RAP3; stimulates the interaction of RELA with HDAC1, HDAC2 and HDAC3 thereby inhibiting NF-kappa-B transcriptional activity. Interacts with DHX9; this interaction is direct and activates NF-kappa-B-mediated transcription. Interacts with LRRC25. Interacts with TBX21. Interacts with KAT2A. Interacts with ZBTB7A; involved in the control by RELA of the accessibility of target gene promoters. Directly interacts with DDX3X; this interaction may trap RELA in the cytoplasm, impairing nuclear relocalization upon TNF activating signals. Interacts with PHF2. Interacts with MKRN2; the interaction leads to its polyubiquitination and proteasome-dependent degradation. Interacts with ECSIT. Interacts with RAB28; the interaction contributes to RELA transport from cytoplasm to nucleus. (Microbial infection) Interacts with human respiratory syncytial virus (HRSV) protein M2-1. As to quaternary structure, (Microbial infection) Interacts with molluscum contagiosum virus MC132. In terms of assembly, (Microbial infection) Interacts with herpes virus 8 virus protein LANA1. (Microbial infection) Interacts with human cytomegalovirus protein UL44; this interaction prevents NF-kappa-B binding to its promoters. Ubiquitinated by RNF182, leading to its proteasomal degradation. Degradation is required for termination of NF-kappa-B response. Polyubiquitinated via 'Lys-29'-linked ubiquitin; leading to lysosomal degradation. Post-translationally, monomethylated at Lys-310 by SETD6. Monomethylation at Lys-310 is recognized by the ANK repeats of EHMT1 and promotes the formation of repressed chromatin at target genes, leading to down-regulation of NF-kappa-B transcription factor activity. Phosphorylation at Ser-311 disrupts the interaction with EHMT1 without preventing monomethylation at Lys-310 and relieves the repression of target genes. In terms of processing, phosphorylation at Ser-311 disrupts the interaction with EHMT1 and promotes transcription factor activity. Phosphorylation on Ser-536 stimulates acetylation on Lys-310 and interaction with CBP; the phosphorylated and acetylated forms show enhanced transcriptional activity. Phosphorylation at Ser-276 by RPS6KA4 and RPS6KA5 promotes its transactivation and transcriptional activities. Phosphorylation at Ser-75 by herpes simplex virus 1/HHV-1 inhibits NF-kappa-B activation. Post-translationally, reversibly acetylated; the acetylation seems to be mediated by CBP, the deacetylation by HDAC3 and SIRT2. Acetylation at Lys-122 enhances DNA binding and impairs association with NFKBIA. Acetylation at Lys-310 is required for full transcriptional activity in the absence of effects on DNA binding and NFKBIA association. Acetylation at Lys-310 promotes interaction with BRD4. Acetylation can also lower DNA-binding and results in nuclear export. Interaction with BRMS1 promotes deacetylation of Lys-310. Lys-310 is deacetylated by SIRT2. In terms of processing, S-nitrosylation of Cys-38 inactivates the enzyme activity. Sulfhydration at Cys-38 mediates the anti-apoptotic activity by promoting the interaction with RPS3 and activating the transcription factor activity. Post-translationally, sumoylation by PIAS3 negatively regulates DNA-bound activated NF-kappa-B. In terms of processing, proteolytically cleaved within a conserved N-terminus region required for base-specific contact with DNA in a CPEN1-mediated manner, and hence inhibits NF-kappa-B transcriptional activity.

The protein resides in the nucleus. It is found in the cytoplasm. Its function is as follows. NF-kappa-B is a pleiotropic transcription factor present in almost all cell types and is the endpoint of a series of signal transduction events that are initiated by a vast array of stimuli related to many biological processes such as inflammation, immunity, differentiation, cell growth, tumorigenesis and apoptosis. NF-kappa-B is a homo- or heterodimeric complex formed by the Rel-like domain-containing proteins RELA/p65, RELB, NFKB1/p105, NFKB1/p50, REL and NFKB2/p52. The heterodimeric RELA-NFKB1 complex appears to be most abundant one. The dimers bind at kappa-B sites in the DNA of their target genes and the individual dimers have distinct preferences for different kappa-B sites that they can bind with distinguishable affinity and specificity. Different dimer combinations act as transcriptional activators or repressors, respectively. The NF-kappa-B heterodimeric RELA-NFKB1 and RELA-REL complexes, for instance, function as transcriptional activators. NF-kappa-B is controlled by various mechanisms of post-translational modification and subcellular compartmentalization as well as by interactions with other cofactors or corepressors. NF-kappa-B complexes are held in the cytoplasm in an inactive state complexed with members of the NF-kappa-B inhibitor (I-kappa-B) family. In a conventional activation pathway, I-kappa-B is phosphorylated by I-kappa-B kinases (IKKs) in response to different activators, subsequently degraded thus liberating the active NF-kappa-B complex which translocates to the nucleus. The inhibitory effect of I-kappa-B on NF-kappa-B through retention in the cytoplasm is exerted primarily through the interaction with RELA. RELA shows a weak DNA-binding site which could contribute directly to DNA binding in the NF-kappa-B complex. Besides its activity as a direct transcriptional activator, it is also able to modulate promoters accessibility to transcription factors and thereby indirectly regulate gene expression. Associates with chromatin at the NF-kappa-B promoter region via association with DDX1. Essential for cytokine gene expression in T-cells. The NF-kappa-B homodimeric RELA-RELA complex appears to be involved in invasin-mediated activation of IL-8 expression. Key transcription factor regulating the IFN response during SARS-CoV-2 infection. The polypeptide is Transcription factor p65 (RELA) (Homo sapiens (Human)).